We begin with the raw amino-acid sequence, 129 residues long: M-zodatoxin-Lt8k (129 aa).

A signal peptide spans 1 to 20 (MKYFVVALALVAAFACIAES). Residues 21–60 (KPAESEHELAEVEEENELADLEDAVWLEHLADLSDLEEAR) constitute a propeptide that is removed on maturation.

It belongs to the cationic peptide 06 (cytoinsectotoxin) family. In terms of tissue distribution, expressed by the venom gland.

Its subcellular location is the secreted. Insecticidal, cytolytic and antimicrobial peptide. Forms voltage-dependent, ion-permeable channels in membranes. At high concentration causes cell membrane lysis. The protein is M-zodatoxin-Lt8k (cit 1-10) of Lachesana tarabaevi (Spider).